The primary structure comprises 502 residues: CBL-interacting serine/threonine-protein kinase 13 (502 aa).

The interval 32-51 (TNKETSTPESPRSPRTPQGS) is disordered. Residues 35–48 (ETSTPESPRSPRTP) are compositionally biased toward low complexity. The Protein kinase domain maps to 57-311 (YEIGKLLGHG…IPEIMKHRWF (255 aa)). ATP-binding positions include 63–71 (LGHGSFAKV) and Lys86. Residue Asp179 is the Proton acceptor of the active site. The segment at 197–226 (DFGLSVVSEQLKQEGICQTFCGTPAYLAPE) is activation loop. A Phosphoserine modification is found at Ser201. Thr215 is modified (phosphothreonine). The interval 331-359 (DDDNDDDDSSSLSSGRSSTASEGDAEFDI) is disordered. A compositionally biased stretch (low complexity) spans 340-352 (SSLSSGRSSTASE). The 22-residue stretch at 366-387 (PRPASLNAFDILSFSDLSGLFE) folds into the NAF domain. Residues 390 to 419 (GQGARFVSAAPMTKIISKLEEIAKEVKFMV) form a PPI region.

Belongs to the protein kinase superfamily. CAMK Ser/Thr protein kinase family. SNF1 subfamily. In terms of assembly, interacts with CBL2 and CBL3. Mn(2+) is required as a cofactor.

It catalyses the reaction L-seryl-[protein] + ATP = O-phospho-L-seryl-[protein] + ADP + H(+). It carries out the reaction L-threonyl-[protein] + ATP = O-phospho-L-threonyl-[protein] + ADP + H(+). Its function is as follows. CIPK serine-threonine protein kinases interact with CBL proteins. Binding of a CBL protein to the regulatory NAF domain of CIPK protein lead to the activation of the kinase in a calcium-dependent manner. The protein is CBL-interacting serine/threonine-protein kinase 13 (CIPK13) of Arabidopsis thaliana (Mouse-ear cress).